Reading from the N-terminus, the 380-residue chain is Chaperone protein DnaJ (380 aa).

The region spanning 5 to 70 is the J domain; that stretch reads DFYEVLGVSK…NLRARYDQYG (66 aa). Residues 135-213 form a CR-type zinc finger; sequence GVSKEIKVPS…CHGEGRYQKT (79 aa). Positions 148, 151, 165, 168, 187, 190, 201, and 204 each coordinate Zn(2+). 4 CXXCXGXG motif repeats span residues 148–155, 165–172, 187–194, and 201–208; these read CEVCNGSG, CPTCHGAG, CPHCHGRG, and CRKCHGEG.

This sequence belongs to the DnaJ family. In terms of assembly, homodimer. Requires Zn(2+) as cofactor.

The protein localises to the cytoplasm. Its function is as follows. Participates actively in the response to hyperosmotic and heat shock by preventing the aggregation of stress-denatured proteins and by disaggregating proteins, also in an autonomous, DnaK-independent fashion. Unfolded proteins bind initially to DnaJ; upon interaction with the DnaJ-bound protein, DnaK hydrolyzes its bound ATP, resulting in the formation of a stable complex. GrpE releases ADP from DnaK; ATP binding to DnaK triggers the release of the substrate protein, thus completing the reaction cycle. Several rounds of ATP-dependent interactions between DnaJ, DnaK and GrpE are required for fully efficient folding. Also involved, together with DnaK and GrpE, in the DNA replication of plasmids through activation of initiation proteins. In Aeromonas salmonicida (strain A449), this protein is Chaperone protein DnaJ.